The following is a 496-amino-acid chain: Ankyrin repeat domain-containing protein 34A (496 aa).

ANK repeat units follow at residues 4-33 (TEGHALLRAVGQGKLRLARLLLEGGAYVNE), 37-72 (QGETALMAACRARYDDPQNKARMVRYLLEQGADPNI), 76-106 (LGRTALMHACAGGGGAAVASLLLAHGADPSV), and 110-139 (AGASALVHALDRGDRETLATLLDACKAKGT). Gln-15 is subject to N5-methylglutamine. Composition is skewed to polar residues over residues 147 to 162 (DTSPSGTKKTRQYLNS) and 180 to 191 (FCTSPSEIQLQT). The segment at 147–473 (DTSPSGTKKT…TKRKLVRRHS (327 aa)) is disordered. Residues 204–214 (AQEEEEKRDVF) are compositionally biased toward basic and acidic residues. Positions 218-233 (LPKPPDDPSPSEPLPK) are enriched in pro residues. Basic residues predominate over residues 234 to 243 (PPRHPPKPLK). Residue Thr-316 is modified to Phosphothreonine. A compositionally biased stretch (basic residues) spans 463 to 473 (RTKRKLVRRHS).

This sequence belongs to the ANKRD34 family. In terms of processing, methylated at Gln-15 by N6AMT1.

The chain is Ankyrin repeat domain-containing protein 34A (ANKRD34A) from Homo sapiens (Human).